Consider the following 128-residue polypeptide: CD59 glycoprotein (128 aa).

A signal peptide spans 1-25; sequence MGIQGGSVLFGLLLILAVFCHSGHS. The UPAR/Ly6 domain maps to 26-108; it reads LQCYSCPYST…ILENGGTTLS (83 aa). Cystine bridges form between Cys28–Cys51, Cys31–Cys38, Cys44–Cys64, Cys70–Cys88, and Cys89–Cys94. The N-linked (GlcNAc...) asparagine glycan is linked to Asn43. Asn102 is lipidated: GPI-anchor amidated asparagine. Positions 103 to 128 are cleaved as a propeptide — removed in mature form; that stretch reads GGTTLSKKTVLLLVTPFLAAAWSLHP.

As to quaternary structure, interacts with T-cell surface antigen CD2. In terms of processing, N- and O-glycosylated.

It is found in the cell membrane. The protein resides in the secreted. Potent inhibitor of the complement membrane attack complex (MAC) action, which protects self-cells from damage during complement activation. Acts by binding to the beta-haipins of C8 (C8A and C8B) components of the assembling MAC, forming an intermolecular beta-sheet that prevents incorporation of the multiple copies of C9 required for complete formation of the osmolytic pore. The polypeptide is CD59 glycoprotein (Callithrix sp. (Marmoset)).